A 410-amino-acid chain; its full sequence is Phytoene synthase 1, chloroplastic (410 aa).

The N-terminal 62 residues, 1–62 (MAIILVRAAS…EAGRPSPAVY (62 aa)), are a transit peptide targeting the chloroplast.

Belongs to the phytoene/squalene synthase family. As to quaternary structure, monomer. Expressed in embryos, endosperm and seedling leaves. Expressed in leaves and endosperm.

Its subcellular location is the plastid. The protein localises to the chloroplast stroma. The catalysed reaction is 2 (2E,6E,10E)-geranylgeranyl diphosphate = 15-cis-phytoene + 2 diphosphate. The protein operates within carotenoid biosynthesis; phytoene biosynthesis; all-trans-phytoene from geranylgeranyl diphosphate: step 1/1. Its function is as follows. Catalyzes the conversion of geranylgeranyl diphosphate to phytoene. Mediates the first committed step in carotenoid biosynthesis. In Zea mays (Maize), this protein is Phytoene synthase 1, chloroplastic.